We begin with the raw amino-acid sequence, 314 residues long: Cell division protein FtsQ (314 aa).

2 stretches are compositionally biased toward basic and acidic residues: residues 1–15 and 30–57; these read MTEH…RVAD and ESKD…ERRA. The disordered stretch occupies residues 1–57; that stretch reads MTEHNEDPQIERVADDAADEEAVTEPLATESKDEPAEHPEFEGPRRRARRERAERRA. Topologically, residues 1–99 are cytoplasmic; sequence MTEHNEDPQI…AARGVVRGLK (99 aa). A helical transmembrane segment spans residues 100–120; sequence ALLATVVLAVVGIGLGLALYF. At 121 to 314 the chain is on the extracellular side; it reads TPAMSAREIV…VSSPDLPTVK (194 aa). A POTRA domain is found at 124–192; that stretch reads MSAREIVIIG…SALRITIVER (69 aa).

This sequence belongs to the FtsQ/DivIB family. FtsQ subfamily.

The protein localises to the cell membrane. Its function is as follows. Essential cell division protein. The protein is Cell division protein FtsQ of Mycobacterium bovis (strain ATCC BAA-935 / AF2122/97).